Consider the following 120-residue polypeptide: Phosphoribosyl-AMP cyclohydrolase (120 aa).

A Mg(2+)-binding site is contributed by D74. C75 contributes to the Zn(2+) binding site. Residues D76 and D78 each coordinate Mg(2+). Zn(2+) is bound by residues C91 and C98.

It belongs to the PRA-CH family. Homodimer. Requires Mg(2+) as cofactor. It depends on Zn(2+) as a cofactor.

It localises to the cytoplasm. It carries out the reaction 1-(5-phospho-beta-D-ribosyl)-5'-AMP + H2O = 1-(5-phospho-beta-D-ribosyl)-5-[(5-phospho-beta-D-ribosylamino)methylideneamino]imidazole-4-carboxamide. It functions in the pathway amino-acid biosynthesis; L-histidine biosynthesis; L-histidine from 5-phospho-alpha-D-ribose 1-diphosphate: step 3/9. Its function is as follows. Catalyzes the hydrolysis of the adenine ring of phosphoribosyl-AMP. The polypeptide is Phosphoribosyl-AMP cyclohydrolase (Natronomonas pharaonis (strain ATCC 35678 / DSM 2160 / CIP 103997 / JCM 8858 / NBRC 14720 / NCIMB 2260 / Gabara) (Halobacterium pharaonis)).